Reading from the N-terminus, the 125-residue chain is Putative superoxide reductase (125 aa).

The Fe cation site is built by E12, H14, H40, H46, C110, and H113.

The protein belongs to the desulfoferrodoxin family. It depends on Fe cation as a cofactor.

The catalysed reaction is reduced [rubredoxin] + superoxide + 2 H(+) = oxidized [rubredoxin] + H2O2. Functionally, uses electrons from reduced NADP, by way of rubredoxin and an oxidoreductase, to catalyze the reduction of superoxide to hydrogen peroxide. The sequence is that of Putative superoxide reductase from Archaeoglobus fulgidus (strain ATCC 49558 / DSM 4304 / JCM 9628 / NBRC 100126 / VC-16).